Here is a 243-residue protein sequence, read N- to C-terminus: Pyridoxine 5'-phosphate synthase (243 aa).

N9 lines the 3-amino-2-oxopropyl phosphate pocket. D11–H12 lines the 1-deoxy-D-xylulose 5-phosphate pocket. R20 contributes to the 3-amino-2-oxopropyl phosphate binding site. H45 (proton acceptor) is an active-site residue. 2 residues coordinate 1-deoxy-D-xylulose 5-phosphate: R47 and H52. E72 functions as the Proton acceptor in the catalytic mechanism. T102 is a binding site for 1-deoxy-D-xylulose 5-phosphate. The active-site Proton donor is H193. 3-amino-2-oxopropyl phosphate contacts are provided by residues G194 and G215–H216.

It belongs to the PNP synthase family. As to quaternary structure, homooctamer; tetramer of dimers.

The protein localises to the cytoplasm. It catalyses the reaction 3-amino-2-oxopropyl phosphate + 1-deoxy-D-xylulose 5-phosphate = pyridoxine 5'-phosphate + phosphate + 2 H2O + H(+). It functions in the pathway cofactor biosynthesis; pyridoxine 5'-phosphate biosynthesis; pyridoxine 5'-phosphate from D-erythrose 4-phosphate: step 5/5. Its function is as follows. Catalyzes the complicated ring closure reaction between the two acyclic compounds 1-deoxy-D-xylulose-5-phosphate (DXP) and 3-amino-2-oxopropyl phosphate (1-amino-acetone-3-phosphate or AAP) to form pyridoxine 5'-phosphate (PNP) and inorganic phosphate. In Shigella boydii serotype 4 (strain Sb227), this protein is Pyridoxine 5'-phosphate synthase.